Reading from the N-terminus, the 459-residue chain is Zinc finger chaperone zpr1 (459 aa).

2 consecutive C4-type zinc fingers follow at residues 38–70 and 259–291; these read CMECGKNGTTKLLLTVIPYFREVVLMSFECPHC and CPSCSHQCDTHMKLLDIPHFKEVIIMSTVCDRC.

It belongs to the ZPR1 family.

Its subcellular location is the cytoplasm. The protein resides in the nucleus. Its function is as follows. Acts as a protein folding chaperone for elongation factor 1-alpha. In Schizosaccharomyces pombe (strain 972 / ATCC 24843) (Fission yeast), this protein is Zinc finger chaperone zpr1.